Consider the following 933-residue polypeptide: Clumping factor A (933 aa).

The N-terminal stretch at 1-39 is a signal peptide; sequence MNMKKKEKHAIRKKSIGVASVLVGTLIGFGLLSSKEADA. The short motif at 9-20 is the YSIRK-G/S signaling motif element; it reads HAIRKKSIGVAS. Disordered stretches follow at residues 34–200 and 529–904; these read SKEA…SNKD and FNNG…SEDE. A ligand binding A region region spans residues 40-542; that stretch reads SENSVTQSDS…SGSGDGIDKP (503 aa). Residues 47–65 are compositionally biased toward low complexity; the sequence is SDSASNESKSNDSSSVSAA. Residues 71–105 show a composition bias toward polar residues; it reads TNVSDTKTSSNTNNGETSVAQNPAQQETTQSSSTN. Composition is skewed to low complexity over residues 106–132 and 143–162; these read ATTE…ATTQ and NQTS…SVNS. Over residues 163 to 200 the composition is skewed to polar residues; it reads PQNSTNAENVSTTQDTSTEATPSNNESAPQSTDASNKD. A compositionally biased stretch (acidic residues) spans 547 to 565; sequence QPDEPGEIEPIPEDSDSDP. Residues 566 to 598 are compositionally biased toward low complexity; it reads GSDSGSDSNSDSGSDSGSDSTSDSGSDSASDSD. Residues 599–861 show a composition bias toward acidic residues; it reads SASDSDSASD…DSDSESDSNS (263 aa). A compositionally biased stretch (low complexity) spans 862–880; the sequence is DSESGSNNNVVPPNSPKNG. The segment covering 887–896 has biased composition (basic and acidic residues); the sequence is NEAKDSKEPL. The LPXTG sorting signal motif lies at 896-900; it reads LPDTG. Position 899 is a pentaglycyl murein peptidoglycan amidated threonine (T899). Residues 900–933 constitute a propeptide, removed by sortase; sequence GSEDEANTSLIWGLLASIGSLLLFRRKKENKDKK.

Belongs to the serine-aspartate repeat-containing protein (SDr) family.

The protein resides in the secreted. It localises to the cell wall. Its function is as follows. Cell surface-associated protein implicated in virulence. Promotes bacterial attachment exclusively to the gamma-chain of human fibrinogen. Induces formation of bacterial clumps. This Staphylococcus aureus (strain COL) protein is Clumping factor A (clfA).